The following is a 513-amino-acid chain: Maturase K (513 aa).

This sequence belongs to the intron maturase 2 family. MatK subfamily.

It localises to the plastid. The protein localises to the chloroplast. In terms of biological role, usually encoded in the trnK tRNA gene intron. Probably assists in splicing its own and other chloroplast group II introns. In Typha latifolia (Bulrush), this protein is Maturase K.